Here is a 347-residue protein sequence, read N- to C-terminus: MAAQKVGLLFGGRSGEHEVSIRSAAAIASALADPSNRDRYQVLPFYIDKEGGWHSGETAAQVLANQKPLFVEEPSDRWQFPADCRDVEVWFPILHGPNGEDGTIQGLLTLMQRPFVGSGVLGSALGMDKIAMKQAFAQASLPQVAYVAVNRSQVFSDPCRYTSLLEQIETELGYPCFVKPANLGSSVGIAKVRDRAELEAALDQAAALDRRLIIEAAIDNPREVECAVLGNDYPQASILGEITYDSDFYDYETKYTDGKAQLLIPAQLSAELQQKLQELAIAAFQAVDASGLSRLDFFLDSQGQIFINEINTLPGFTALSMYPQLWAASGVAFPDLVHRLIQLALER.

The ATP-grasp domain maps to 133–342 (KQAFAQASLP…FPDLVHRLIQ (210 aa)). ATP is bound at residue 169-224 (ETELGYPCFVKPANLGSSVGIAKVRDRAELEAALDQAAALDRRLIIEAAIDNPREV). The Mg(2+) site is built by Asp-296, Glu-309, and Asn-311.

Belongs to the D-alanine--D-alanine ligase family. It depends on Mg(2+) as a cofactor. Requires Mn(2+) as cofactor.

The protein resides in the cytoplasm. It carries out the reaction 2 D-alanine + ATP = D-alanyl-D-alanine + ADP + phosphate + H(+). It functions in the pathway cell wall biogenesis; peptidoglycan biosynthesis. Its function is as follows. Cell wall formation. This is D-alanine--D-alanine ligase from Synechococcus elongatus (strain ATCC 33912 / PCC 7942 / FACHB-805) (Anacystis nidulans R2).